A 204-amino-acid chain; its full sequence is Recombination protein RecR (204 aa).

Residues 63–78 form a C4-type zinc finger; it reads CRICFNVADSELCPIC. One can recognise a Toprim domain in the interval 86–181; the sequence is NKICVVEQPQ…KVTRLARGLP (96 aa).

The protein belongs to the RecR family.

In terms of biological role, may play a role in DNA repair. It seems to be involved in an RecBC-independent recombinational process of DNA repair. It may act with RecF and RecO. This Dehalococcoides mccartyi (strain ATCC BAA-2266 / KCTC 15142 / 195) (Dehalococcoides ethenogenes (strain 195)) protein is Recombination protein RecR.